The following is a 215-amino-acid chain: Cytochrome b6 (215 aa).

A helical membrane pass occupies residues 32 to 52; sequence IFYCLGGITLTCFLVQVATGF. Cysteine 35 contributes to the heme c binding site. Histidine 86 and histidine 100 together coordinate heme b. A run of 3 helical transmembrane segments spans residues 90–110, 116–136, and 186–206; these read ASMM…TGGF, LTWV…VTGY, and LHTF…FLMI. Residues histidine 187 and histidine 202 each contribute to the heme b site.

The protein belongs to the cytochrome b family. PetB subfamily. As to quaternary structure, the 4 large subunits of the cytochrome b6-f complex are cytochrome b6, subunit IV (17 kDa polypeptide, PetD), cytochrome f and the Rieske protein, while the 4 small subunits are PetG, PetL, PetM and PetN. The complex functions as a dimer. It depends on heme b as a cofactor. Heme c is required as a cofactor.

It is found in the plastid. Its subcellular location is the chloroplast thylakoid membrane. Component of the cytochrome b6-f complex, which mediates electron transfer between photosystem II (PSII) and photosystem I (PSI), cyclic electron flow around PSI, and state transitions. This Physcomitrium patens (Spreading-leaved earth moss) protein is Cytochrome b6.